Reading from the N-terminus, the 66-residue chain is Cocaine- and amphetamine-regulated transcript protein (66 aa).

Cystine bridges form between Cys34–Cys52 and Cys40–Cys60.

Belongs to the CART family.

The protein resides in the secreted. In terms of biological role, satiety factor closely associated with the actions of leptin and neuropeptide y; this anorectic peptide inhibits both normal and starvation-induced feeding and completely blocks the feeding response induced by neuropeptide Y and regulated by leptin in the hypothalamus. This is Cocaine- and amphetamine-regulated transcript protein (CARTPT) from Sus scrofa (Pig).